Here is a 36-residue protein sequence, read N- to C-terminus: Potassium channel toxin alpha-KTx 23.1 (36 aa).

4 cysteine pairs are disulfide-bonded: Cys6–Cys26, Cys12–Cys31, Cys16–Cys33, and Cys21–Cys36. The residue at position 36 (Cys36) is a Cysteine amide.

Belongs to the short scorpion toxin superfamily. Potassium channel inhibitor family. Alpha-KTx 23 subfamily. Expressed by the venom gland.

Its subcellular location is the secreted. Voltage-gated potassium channel inhibitor. Selectively and irreversibly binds (K(d)=2.9 pM) and blocks hKv1.3/KCNA3 potassium channels of human T-lymphocytes. Weakly blocks hKCa3.1/KCNN4, mKv1.1/KCNA1, and hKv1.2/KCNA2 channels. In vivo, high doses (200 ug) produce no symptoms of intoxication when injected into mice. This Vaejovis mexicanus smithi (Mexican scorpion) protein is Potassium channel toxin alpha-KTx 23.1.